The following is a 76-amino-acid chain: MGSFSIWHWLIVLVIVMLIFGTKKLRNVGQDLGGAVKGFKDGMKEANADKPAEEAQPTQQVGGHTIDVEVKEKTKS.

The helical transmembrane segment at 1–21 threads the bilayer; the sequence is MGSFSIWHWLIVLVIVMLIFG. The interval 47 to 76 is disordered; it reads NADKPAEEAQPTQQVGGHTIDVEVKEKTKS. Residues 66–76 are compositionally biased toward basic and acidic residues; the sequence is IDVEVKEKTKS.

This sequence belongs to the TatA/E family. In terms of assembly, the Tat system comprises two distinct complexes: a TatABC complex, containing multiple copies of TatA, TatB and TatC subunits, and a separate TatA complex, containing only TatA subunits. Substrates initially bind to the TatABC complex, which probably triggers association of the separate TatA complex to form the active translocon.

The protein localises to the cell inner membrane. In terms of biological role, part of the twin-arginine translocation (Tat) system that transports large folded proteins containing a characteristic twin-arginine motif in their signal peptide across membranes. TatA could form the protein-conducting channel of the Tat system. The sequence is that of Sec-independent protein translocase protein TatA from Dechloromonas aromatica (strain RCB).